The primary structure comprises 240 residues: UDP-2,3-diacylglucosamine hydrolase (240 aa).

Mn(2+)-binding residues include aspartate 7, histidine 9, aspartate 40, asparagine 78, and histidine 113. 78–79 (NR) lines the substrate pocket. Positions 121, 159, 166, and 194 each coordinate substrate. Histidine 194 and histidine 196 together coordinate Mn(2+).

This sequence belongs to the LpxH family. The cofactor is Mn(2+).

The protein localises to the cell inner membrane. The enzyme catalyses UDP-2-N,3-O-bis[(3R)-3-hydroxytetradecanoyl]-alpha-D-glucosamine + H2O = 2-N,3-O-bis[(3R)-3-hydroxytetradecanoyl]-alpha-D-glucosaminyl 1-phosphate + UMP + 2 H(+). Its pathway is glycolipid biosynthesis; lipid IV(A) biosynthesis; lipid IV(A) from (3R)-3-hydroxytetradecanoyl-[acyl-carrier-protein] and UDP-N-acetyl-alpha-D-glucosamine: step 4/6. In terms of biological role, hydrolyzes the pyrophosphate bond of UDP-2,3-diacylglucosamine to yield 2,3-diacylglucosamine 1-phosphate (lipid X) and UMP by catalyzing the attack of water at the alpha-P atom. Involved in the biosynthesis of lipid A, a phosphorylated glycolipid that anchors the lipopolysaccharide to the outer membrane of the cell. The chain is UDP-2,3-diacylglucosamine hydrolase from Pseudomonas putida (strain ATCC 700007 / DSM 6899 / JCM 31910 / BCRC 17059 / LMG 24140 / F1).